Here is a 440-residue protein sequence, read N- to C-terminus: Thymidine phosphorylase (440 aa).

Belongs to the thymidine/pyrimidine-nucleoside phosphorylase family. In terms of assembly, homodimer.

The enzyme catalyses thymidine + phosphate = 2-deoxy-alpha-D-ribose 1-phosphate + thymine. The protein operates within pyrimidine metabolism; dTMP biosynthesis via salvage pathway; dTMP from thymine: step 1/2. The enzymes which catalyze the reversible phosphorolysis of pyrimidine nucleosides are involved in the degradation of these compounds and in their utilization as carbon and energy sources, or in the rescue of pyrimidine bases for nucleotide synthesis. In Escherichia coli (strain 55989 / EAEC), this protein is Thymidine phosphorylase.